The following is a 994-amino-acid chain: Zinc finger protein basonuclin-1 (994 aa).

Positions 1-29 are disordered; it reads MRRRPPSRGGRGAARARETRRQPRHRSGR. The segment at 240–249 is hydrophobic; sequence MTFMLPFQFF. 2 C2H2-type zinc fingers span residues 357–380 and 385–414; these read VFCT…NAVH and HKCT…PRLH. Disordered stretches follow at residues 402-425 and 444-472; these read RNRH…RDKD and TVTS…FPNI. The Nuclear localization signal motif lies at 533–539; sequence PKKKSRK. Ser-537 and Ser-541 each carry phosphoserine. Positions 555-639 are disordered; sequence NEKRHNLSSD…HNSERETEQT (85 aa). Acidic residues predominate over residues 563 to 578; sequence SDEDMPLQVVSEDEQE. Over residues 603–614 the composition is skewed to basic and acidic residues; the sequence is PEGERPCHRESV. The segment covering 615-630 has biased composition (polar residues); the sequence is IESSGAISQTPEQATH. 2 consecutive C2H2-type zinc fingers follow at residues 720–743 and 748–775; these read FQCD…KNMH and HTCT…LNLH. The span at 859–877 shows a compositional bias: low complexity; that stretch reads STTSSMKSESSSHSSWDSD. The tract at residues 859-881 is disordered; the sequence is STTSSMKSESSSHSSWDSDGVSE. 2 C2H2-type zinc fingers span residues 928–951 and 956–983; these read ITCH…KTVH and HKCK…PNLH. Positions 970-994 are disordered; the sequence is VRSRNRHSQNPNLHKSLASSPSHLQ.

Interacts with HSF2BP (via C-terminus). In terms of processing, phosphorylation on Ser-537 and Ser-541 leads to cytoplasmic localization. In epidermis, primarily detected in cells of the basal or immediately suprabasal layers (at protein level). In hair follicles, mainly expressed in the outer root sheath (at protein level). Expressed in epidermis, testis and foreskin, and to a lower extent in thymus, spleen, mammary glands, placenta, brain and heart. Expressed in the ovary, notably in oocytes.

The protein resides in the nucleus. It is found in the cytoplasm. The protein localises to the nucleoplasm. In terms of biological role, transcriptional activator. It is likely involved in the regulation of keratinocytes terminal differentiation in squamous epithelia and hair follicles. Required for the maintenance of spermatogenesis. It is involved in the positive regulation of oocyte maturation, probably acting through the control of BMP15 levels and regulation of AKT signaling cascade. May also play a role in the early development of embryos. This Homo sapiens (Human) protein is Zinc finger protein basonuclin-1 (BNC1).